Consider the following 285-residue polypeptide: HTH-type transcriptional regulator MurR (285 aa).

The HTH rpiR-type domain occupies 1–77 (MLYLTKIRNA…MALIGEYSAS (77 aa)). The segment at residues 37–56 (SRKMAKQLGISQSSIVKFAQ) is a DNA-binding region (H-T-H motif). The SIS domain maps to 128–268 (IIEVISKAPF…FVGLVQLNDV (141 aa)).

In terms of assembly, homotetramer.

The protein operates within amino-sugar metabolism; N-acetylmuramate degradation [regulation]. Functionally, represses the expression of the murPQ operon involved in the uptake and degradation of N-acetylmuramic acid (MurNAc). Binds to two adjacent inverted repeats within the operator region. MurNAc 6-phosphate, the substrate of MurQ, is the specific inducer that weakens binding of MurR to the operator. In Escherichia coli O9:H4 (strain HS), this protein is HTH-type transcriptional regulator MurR.